The sequence spans 576 residues: Arginine--tRNA ligase (576 aa).

The 'HIGH' region motif lies at 132–142; the sequence is ANPTGPMHIGH.

The protein belongs to the class-I aminoacyl-tRNA synthetase family. Monomer.

The protein localises to the cytoplasm. It carries out the reaction tRNA(Arg) + L-arginine + ATP = L-arginyl-tRNA(Arg) + AMP + diphosphate. This is Arginine--tRNA ligase from Ehrlichia chaffeensis (strain ATCC CRL-10679 / Arkansas).